Here is a 214-residue protein sequence, read N- to C-terminus: Probable transaldolase (214 aa).

Lysine 83 (schiff-base intermediate with substrate) is an active-site residue.

This sequence belongs to the transaldolase family. Type 3B subfamily.

The protein localises to the cytoplasm. It catalyses the reaction D-sedoheptulose 7-phosphate + D-glyceraldehyde 3-phosphate = D-erythrose 4-phosphate + beta-D-fructose 6-phosphate. Its pathway is carbohydrate degradation; pentose phosphate pathway; D-glyceraldehyde 3-phosphate and beta-D-fructose 6-phosphate from D-ribose 5-phosphate and D-xylulose 5-phosphate (non-oxidative stage): step 2/3. In terms of biological role, transaldolase is important for the balance of metabolites in the pentose-phosphate pathway. This is Probable transaldolase from Streptococcus equi subsp. equi (strain 4047).